The primary structure comprises 177 residues: Large ribosomal subunit protein uL22 (177 aa).

The tract at residues 118 to 177 is disordered; the sequence is VESRPSREGRRGGAGESAGGARARRAQGSKAAAAKKAPASSSKKAATTTEASEEAKGGSQ. Over residues 121 to 130 the composition is skewed to basic and acidic residues; sequence RPSREGRRGG. A compositionally biased stretch (low complexity) spans 145–167; sequence GSKAAAAKKAPASSSKKAATTTE.

The protein belongs to the universal ribosomal protein uL22 family. In terms of assembly, part of the 50S ribosomal subunit.

Functionally, this protein binds specifically to 23S rRNA; its binding is stimulated by other ribosomal proteins, e.g. L4, L17, and L20. It is important during the early stages of 50S assembly. It makes multiple contacts with different domains of the 23S rRNA in the assembled 50S subunit and ribosome. In terms of biological role, the globular domain of the protein is located near the polypeptide exit tunnel on the outside of the subunit, while an extended beta-hairpin is found that lines the wall of the exit tunnel in the center of the 70S ribosome. The sequence is that of Large ribosomal subunit protein uL22 from Mycobacterium sp. (strain KMS).